The chain runs to 206 residues: Orotate phosphoribosyltransferase (206 aa).

Residues Arg-93, Lys-97, His-99, and Glu-119–Thr-127 each bind 5-phospho-alpha-D-ribose 1-diphosphate. Position 123 (Ser-123) interacts with orotate.

Belongs to the purine/pyrimidine phosphoribosyltransferase family. PyrE subfamily. In terms of assembly, homodimer. Mg(2+) is required as a cofactor.

It catalyses the reaction orotidine 5'-phosphate + diphosphate = orotate + 5-phospho-alpha-D-ribose 1-diphosphate. It participates in pyrimidine metabolism; UMP biosynthesis via de novo pathway; UMP from orotate: step 1/2. Functionally, catalyzes the transfer of a ribosyl phosphate group from 5-phosphoribose 1-diphosphate to orotate, leading to the formation of orotidine monophosphate (OMP). The protein is Orotate phosphoribosyltransferase of Bacillus caldolyticus.